Reading from the N-terminus, the 576-residue chain is Flagellin B (576 aa).

This sequence belongs to the bacterial flagellin family. As to quaternary structure, heteromer of FlaA and FlaB. Interacts with FliW. Interacts with FliS.

The protein localises to the secreted. It is found in the bacterial flagellum. Flagellin is the subunit protein which polymerizes to form the filaments of bacterial flagella. In Campylobacter jejuni subsp. jejuni serotype O:6 (strain 81116 / NCTC 11828), this protein is Flagellin B (flaB).